A 121-amino-acid chain; its full sequence is D-ornithine 4,5-aminomutase subunit alpha (121 aa).

As to quaternary structure, heterotetramer of 2 alpha (OraS) and 2 beta (OraE) subunits.

It carries out the reaction D-ornithine = (2R,4S)-2,4-diaminopentanoate. Its activity is regulated as follows. Increased activity in the presence of dithiothreitol (DTT) in vitro. Inhibited by 1 mM potassium phosphate and potassium chloride. Inhibited by L-alpha-ornithine, D,L-alpha-lysine, L-beta-lysine (50%-60%), L-alpha-lysine (26%) and by delta-amino-n-valeric acid to a lesser extent. Significant decrease in activity is observed in the presence of 0.2 mM p-chloromercuribenzoate, N-ethylmaleimide and also by 2 mM iodoacetate to a lesser extent but not inhibited by arsenite. Functionally, component of a complex that catalyzes the reversible migration of the omega amino group of D-ornithine to C-4 to form (2R,4S)-2,4-diaminopentanoic acid. The role of OraS remains obscure; however, it seems to be required for a correct folding of the OraE subunit. The complex is active only on D-ornithine and 2,4-diaminopentanoic acid and not active on L-ornithine, L-beta-lysine, L-alpha-lysine or D-alpha-lysine. This is D-ornithine 4,5-aminomutase subunit alpha (oraS) from Acetoanaerobium sticklandii (strain ATCC 12662 / DSM 519 / JCM 1433 / CCUG 9281 / NCIMB 10654 / HF) (Clostridium sticklandii).